Consider the following 406-residue polypeptide: Kelch domain-containing protein 1 (406 aa).

6 Kelch repeats span residues 24–76 (FLYV…CGAC), 80–134 (RLYV…VYKD), 135–181 (RLIY…TKTR), 208–258 (KGYV…AITD), 260–307 (KLFL…ACLG), and 311–361 (EIMV…LKSQ).

In terms of assembly, component of a CRL5 E3 ubiquitin-protein ligase complex, also named ECS (Elongin BC-CUL2/5-SOCS-box protein) complex, composed of CUL5, Elongin BC (ELOB and ELOC), RBX1 and substrate-specific adapter KLHDC1.

Its subcellular location is the cytoplasm. It is found in the cytosol. It functions in the pathway protein modification; protein ubiquitination. In terms of biological role, substrate-recognition component of a Cul5-RING (CRL5) E3 ubiquitin-protein ligase complex of the DesCEND (destruction via C-end degrons) pathway, which recognizes a C-degron located at the extreme C terminus of target proteins, leading to their ubiquitination and degradation. The C-degron recognized by the DesCEND pathway is usually a motif of less than ten residues and can be present in full-length proteins, truncated proteins or proteolytically cleaved forms. The CRL5(KLHDC1) complex mediates ubiquitination and degradation of truncated SELENOS selenoprotein produced by failed UGA/Sec decoding, which ends with a glycine. This is Kelch domain-containing protein 1 from Mus musculus (Mouse).